The following is a 281-amino-acid chain: UPF0162 protein XF_1494 (281 aa).

TPR repeat units follow at residues 193–226 (VRIL…VPNQ) and 227–260 (PEAL…YPST).

Belongs to the UPF0162 family.

This is UPF0162 protein XF_1494 from Xylella fastidiosa (strain 9a5c).